Reading from the N-terminus, the 352-residue chain is tRNA pseudouridine synthase D (352 aa).

Aspartate 81 functions as the Nucleophile in the catalytic mechanism. Residues 157–303 enclose the TRUD domain; sequence GVPNYFGAQR…MDHERRILRL (147 aa).

The protein belongs to the pseudouridine synthase TruD family.

It carries out the reaction uridine(13) in tRNA = pseudouridine(13) in tRNA. Its function is as follows. Responsible for synthesis of pseudouridine from uracil-13 in transfer RNAs. The protein is tRNA pseudouridine synthase D of Pseudomonas entomophila (strain L48).